Here is a 197-residue protein sequence, read N- to C-terminus: MKAIILAGGQSERFGAPKAFAEIDGKMFYEQIITVLDSMNMFNEIIISSNETLASEFKGARVIVDDSEHKNKGPLSGIYSVMKQDFESELFFVISVDTPLITAKAISQLYQFMVEHVIEDQLDIAGFKEGNHPIPTIAFYSPNCLPIIARALESDDYSMRHVYQQTASDWIDVSSVDDDTEWYKNINYPQDLESIKK.

GTP is bound by residues 6-8, K18, D65, and D97; that span reads LAG. D97 serves as a coordination point for Mg(2+).

The protein belongs to the MobA family. It depends on Mg(2+) as a cofactor.

The protein resides in the cytoplasm. The enzyme catalyses Mo-molybdopterin + GTP + H(+) = Mo-molybdopterin guanine dinucleotide + diphosphate. Transfers a GMP moiety from GTP to Mo-molybdopterin (Mo-MPT) cofactor (Moco or molybdenum cofactor) to form Mo-molybdopterin guanine dinucleotide (Mo-MGD) cofactor. The sequence is that of Probable molybdenum cofactor guanylyltransferase from Staphylococcus carnosus (strain TM300).